The chain runs to 275 residues: NAD(P)H-hydrate epimerase (275 aa).

Residues 49–258 enclose the YjeF N-terminal domain; it reads AIKIDQELFS…ALAAKYELNL (210 aa). Residue 102–106 coordinates (6S)-NADPHX; it reads NNGGD. K(+) contacts are provided by Asn-103 and Asp-167. (6S)-NADPHX is bound by residues 171–177 and Asp-200; that span reads GFSFKPP. Ser-203 is a binding site for K(+).

The protein belongs to the NnrE/AIBP family. Requires K(+) as cofactor.

It carries out the reaction (6R)-NADHX = (6S)-NADHX. The catalysed reaction is (6R)-NADPHX = (6S)-NADPHX. Its function is as follows. Catalyzes the epimerization of the S- and R-forms of NAD(P)HX, a damaged form of NAD(P)H that is a result of enzymatic or heat-dependent hydration. This is a prerequisite for the S-specific NAD(P)H-hydrate dehydratase to allow the repair of both epimers of NAD(P)HX. The protein is NAD(P)H-hydrate epimerase of Ixodes scapularis (Black-legged tick).